Here is a 143-residue protein sequence, read N- to C-terminus: Aspartate 1-decarboxylase (143 aa).

The active-site Schiff-base intermediate with substrate; via pyruvic acid is the serine 25. Serine 25 is modified (pyruvic acid (Ser)). Threonine 57 contacts substrate. Tyrosine 58 (proton donor) is an active-site residue. Residue 73-75 participates in substrate binding; that stretch reads GAA.

Belongs to the PanD family. Heterooctamer of four alpha and four beta subunits. Pyruvate is required as a cofactor. Post-translationally, is synthesized initially as an inactive proenzyme, which is activated by self-cleavage at a specific serine bond to produce a beta-subunit with a hydroxyl group at its C-terminus and an alpha-subunit with a pyruvoyl group at its N-terminus.

Its subcellular location is the cytoplasm. It catalyses the reaction L-aspartate + H(+) = beta-alanine + CO2. It functions in the pathway cofactor biosynthesis; (R)-pantothenate biosynthesis; beta-alanine from L-aspartate: step 1/1. Its function is as follows. Catalyzes the pyruvoyl-dependent decarboxylation of aspartate to produce beta-alanine. The sequence is that of Aspartate 1-decarboxylase from Mycolicibacterium paratuberculosis (strain ATCC BAA-968 / K-10) (Mycobacterium paratuberculosis).